A 339-amino-acid chain; its full sequence is Heat stress transcription factor C-1a (339 aa).

A coiled-coil region spans residues 154-217 (EEEDAAEDVL…LAKLADDPNA (64 aa)). The hydrophobic repeat HR-A/B stretch occupies residues 176–212 (LRHEQTAIGEELARMSQRLQATERRPDQLMSFLAKLA). The segment at 227–248 (AERKRRRQHLPSHEPTVCPLPP) is disordered. The Nuclear localization signal motif lies at 229–233 (RKRRR).

It belongs to the HSF family. Class C subfamily. Homotrimer. Post-translationally, exhibits temperature-dependent phosphorylation.

It localises to the nucleus. Functionally, transcriptional regulator that specifically binds DNA of heat shock promoter elements (HSE). This chain is Heat stress transcription factor C-1a (HSFC1A), found in Oryza sativa subsp. japonica (Rice).